The sequence spans 390 residues: MSQSTIESTNKKEINKGKAPAKETILSPRFYTTDFEAMENMDLSINEEELEAICEEFRKDYNRHHFVRNSEFEGAAEKLDPETRELFVDFLEGSCTSEFSGFLLYKELSKRIKDKNPLLAECFAHMARDEARHAGFLNKSMSDFGLQLDLGFLTANKDYTYFPPRSIFYATYLSEKIGYWRYIAIYRHLEKNPNSKIFPLFNYFENWCQDENRHGDFFDALMKAQPRTVKSLSQKITIGGSTFTHPLFDYFHRFRYFLNNLPLTSKLWSRFFLLAVFATMYARDLGIKKDFYSSLGLDARDYDQFVINKTNETAARVFPVVMDVNNKSFYGRLDKIVENNKILSDIASGTGNKVSKTFRKVPKYLSNGYQLLRLYLLKPLDSKDYQPSIR.

Positions 1–20 are disordered; that stretch reads MSQSTIESTNKKEINKGKAP.

This sequence belongs to the AcsF family. Requires Fe cation as cofactor.

The catalysed reaction is Mg-protoporphyrin IX 13-monomethyl ester + 3 NADPH + 3 O2 + 2 H(+) = 3,8-divinyl protochlorophyllide a + 3 NADP(+) + 5 H2O. It functions in the pathway porphyrin-containing compound metabolism; chlorophyll biosynthesis (light-independent). Functionally, catalyzes the formation of the isocyclic ring in chlorophyll biosynthesis. Mediates the cyclase reaction, which results in the formation of divinylprotochlorophyllide (Pchlide) characteristic of all chlorophylls from magnesium-protoporphyrin IX 13-monomethyl ester (MgPMME). The sequence is that of Magnesium-protoporphyrin IX monomethyl ester [oxidative] cyclase from Prochlorococcus marinus (strain MIT 9301).